Consider the following 271-residue polypeptide: MSRIQNTFAALAAQGRKGLIPFITAGDPDPSRTVELMHALAEGGADVIELGVPFSDPMADGPVIQRSSERALAKGVTLRRVLDDVRRFRERDRQTPVVLMGYANPIERMGEDAFAAAARDAGVDGVLVVDYPPEESHDFAAKMRAAGIDPIFLLAPTSTDDRIAAVGEVASGYVYYVSLKGVTGAANLDVSTIEGKIPAIKSRVPLPVGVGFGIRDAATARAVAEVADAVVIGSRLVQLLEQAAPENAAAELKEFVAGLRAAIDGAAKPAA.

Active-site proton acceptor residues include Glu-49 and Asp-60.

The protein belongs to the TrpA family. Tetramer of two alpha and two beta chains.

The enzyme catalyses (1S,2R)-1-C-(indol-3-yl)glycerol 3-phosphate + L-serine = D-glyceraldehyde 3-phosphate + L-tryptophan + H2O. It participates in amino-acid biosynthesis; L-tryptophan biosynthesis; L-tryptophan from chorismate: step 5/5. Functionally, the alpha subunit is responsible for the aldol cleavage of indoleglycerol phosphate to indole and glyceraldehyde 3-phosphate. The polypeptide is Tryptophan synthase alpha chain (Burkholderia thailandensis (strain ATCC 700388 / DSM 13276 / CCUG 48851 / CIP 106301 / E264)).